The following is a 993-amino-acid chain: Testis-expressed protein 13C (993 aa).

3 disordered regions span residues 281-381, 520-547, and 894-959; these read QEET…SLKK, DSKS…SHSL, and FSKS…PVNW. Residues 325–335 are compositionally biased toward polar residues; it reads GMTSQGDSSSH. A compositionally biased stretch (basic and acidic residues) spans 353 to 364; the sequence is SRSHSLEKKPVM. Positions 944-957 are enriched in polar residues; the sequence is ESQQQKPASCSSPV. A RanBP2-type zinc finger spans residues 955 to 984; it reads SPVNWACPWCNAMNFPRNKVCSKCKRVRMP.

Belongs to the TEX13 family.

The sequence is that of Testis-expressed protein 13C from Homo sapiens (Human).